The sequence spans 165 residues: Ribosome maturation factor RimM (165 aa).

In terms of domain architecture, PRC barrel spans 94 to 165 (EDEFYIADLN…YVVLNYQREI (72 aa)).

The protein belongs to the RimM family. Binds ribosomal protein uS19.

The protein localises to the cytoplasm. Its function is as follows. An accessory protein needed during the final step in the assembly of 30S ribosomal subunit, possibly for assembly of the head region. Essential for efficient processing of 16S rRNA. May be needed both before and after RbfA during the maturation of 16S rRNA. It has affinity for free ribosomal 30S subunits but not for 70S ribosomes. In Rickettsia felis (strain ATCC VR-1525 / URRWXCal2) (Rickettsia azadi), this protein is Ribosome maturation factor RimM.